Reading from the N-terminus, the 274-residue chain is Phosphate import ATP-binding protein PstB (274 aa).

The segment covering Met1 to Pro11 has biased composition (polar residues). The segment at Met1–Gln21 is disordered. An ABC transporter domain is found at Val28–Ile269. Gly60–Ser67 contributes to the ATP binding site.

The protein belongs to the ABC transporter superfamily. Phosphate importer (TC 3.A.1.7) family. As to quaternary structure, the complex is composed of two ATP-binding proteins (PstB), two transmembrane proteins (PstC and PstA) and a solute-binding protein (PstS).

It is found in the cell inner membrane. The catalysed reaction is phosphate(out) + ATP + H2O = ADP + 2 phosphate(in) + H(+). Part of the ABC transporter complex PstSACB involved in phosphate import. Responsible for energy coupling to the transport system. This is Phosphate import ATP-binding protein PstB from Rhodopseudomonas palustris (strain BisB5).